We begin with the raw amino-acid sequence, 314 residues long: Ribosomal protein L11 methyltransferase (314 aa).

S-adenosyl-L-methionine-binding residues include Thr161, Gly182, Asp204, and Asn248.

It belongs to the methyltransferase superfamily. PrmA family.

The protein localises to the cytoplasm. It catalyses the reaction L-lysyl-[protein] + 3 S-adenosyl-L-methionine = N(6),N(6),N(6)-trimethyl-L-lysyl-[protein] + 3 S-adenosyl-L-homocysteine + 3 H(+). In terms of biological role, methylates ribosomal protein L11. The protein is Ribosomal protein L11 methyltransferase of Listeria innocua serovar 6a (strain ATCC BAA-680 / CLIP 11262).